A 410-amino-acid chain; its full sequence is Peptidase T (410 aa).

Histidine 79 contributes to the Zn(2+) binding site. The active site involves aspartate 81. Aspartate 142 serves as a coordination point for Zn(2+). Glutamate 176 (proton acceptor) is an active-site residue. The Zn(2+) site is built by glutamate 177, aspartate 199, and histidine 381.

This sequence belongs to the peptidase M20B family. Requires Zn(2+) as cofactor.

It is found in the cytoplasm. It catalyses the reaction Release of the N-terminal residue from a tripeptide.. In terms of biological role, cleaves the N-terminal amino acid of tripeptides. The chain is Peptidase T from Bacillus licheniformis (strain ATCC 14580 / DSM 13 / JCM 2505 / CCUG 7422 / NBRC 12200 / NCIMB 9375 / NCTC 10341 / NRRL NRS-1264 / Gibson 46).